The chain runs to 155 residues: Ribosome maturation factor RimP (155 aa).

This sequence belongs to the RimP family.

The protein resides in the cytoplasm. In terms of biological role, required for maturation of 30S ribosomal subunits. In Listeria monocytogenes serotype 4b (strain CLIP80459), this protein is Ribosome maturation factor RimP.